Consider the following 38-residue polypeptide: Phospholipase A2 2 (38 aa).

Ca(2+)-binding residues include Tyr-28, Gly-30, and Gly-32.

This sequence belongs to the phospholipase A2 family. Group I subfamily. It depends on Ca(2+) as a cofactor. Expressed by the venom gland.

Its subcellular location is the secreted. It catalyses the reaction a 1,2-diacyl-sn-glycero-3-phosphocholine + H2O = a 1-acyl-sn-glycero-3-phosphocholine + a fatty acid + H(+). Its function is as follows. Snake venom phospholipase A2 (PLA2) that inhibits neuromuscular transmission by blocking acetylcholine release from the nerve termini. PLA2 catalyzes the calcium-dependent hydrolysis of the 2-acyl groups in 3-sn-phosphoglycerides. The chain is Phospholipase A2 2 from Calliophis bivirgatus (Blue Malaysian coral snake).